A 231-amino-acid polypeptide reads, in one-letter code: DNA mismatch repair protein MutH (231 aa).

This sequence belongs to the MutH family.

It is found in the cytoplasm. In terms of biological role, sequence-specific endonuclease that cleaves unmethylated GATC sequences. It is involved in DNA mismatch repair. The protein is DNA mismatch repair protein MutH of Klebsiella pneumoniae (strain 342).